We begin with the raw amino-acid sequence, 333 residues long: Ornithine carbamoyltransferase (333 aa).

Carbamoyl phosphate-binding positions include 56-59, Arg107, and 134-137; these read STRT and HPTQ. L-ornithine is bound by residues Asn167, Asp231, and 235–236; that span reads SM. Residues 273–274 and Arg318 contribute to the carbamoyl phosphate site; that span reads CL.

This sequence belongs to the aspartate/ornithine carbamoyltransferase superfamily. OTCase family.

The protein localises to the cytoplasm. It catalyses the reaction carbamoyl phosphate + L-ornithine = L-citrulline + phosphate + H(+). Its pathway is amino-acid degradation; L-arginine degradation via ADI pathway; carbamoyl phosphate from L-arginine: step 2/2. Reversibly catalyzes the transfer of the carbamoyl group from carbamoyl phosphate (CP) to the N(epsilon) atom of ornithine (ORN) to produce L-citrulline. In Clostridium botulinum (strain ATCC 19397 / Type A), this protein is Ornithine carbamoyltransferase.